Consider the following 352-residue polypeptide: Quinolinate synthase (352 aa).

Residues His-48 and Ser-69 each contribute to the iminosuccinate site. [4Fe-4S] cluster is bound at residue Cys-114. Residues 140–142 and Ser-157 each bind iminosuccinate; that span reads YAN. Residue Cys-201 participates in [4Fe-4S] cluster binding. Iminosuccinate contacts are provided by residues 227–229 and Thr-244; that span reads HPE. Cys-298 lines the [4Fe-4S] cluster pocket.

The protein belongs to the quinolinate synthase family. Type 1 subfamily. Requires [4Fe-4S] cluster as cofactor.

It is found in the cytoplasm. It carries out the reaction iminosuccinate + dihydroxyacetone phosphate = quinolinate + phosphate + 2 H2O + H(+). Its pathway is cofactor biosynthesis; NAD(+) biosynthesis; quinolinate from iminoaspartate: step 1/1. Its function is as follows. Catalyzes the condensation of iminoaspartate with dihydroxyacetone phosphate to form quinolinate. The chain is Quinolinate synthase from Pseudomonas entomophila (strain L48).